Consider the following 204-residue polypeptide: Protease (204 aa).

Catalysis depends on residues His54, Asp71, and Cys121.

Belongs to the peptidase C5 family. Interacts with protease cofactor pVI-C; this interaction is necessary for protease activation.

Its subcellular location is the virion. It is found in the host nucleus. The enzyme catalyses Cleaves proteins of the adenovirus and its host cell at two consensus sites: -Yaa-Xaa-Gly-Gly-|-Xaa- and -Yaa-Xaa-Gly-Xaa-|-Gly- (in which Yaa is Met, Ile or Leu, and Xaa is any amino acid).. Its activity is regulated as follows. Requires DNA and protease cofactor for maximal activation. Inside nascent virions, becomes partially activated by binding to the viral DNA, allowing it to cleave the cofactor that binds to the protease and fully activates it. Actin, like the viral protease cofactor, seems to act as a cofactor in the cleavage of cytokeratin 18 and of actin itself. Its function is as follows. Cleaves viral precursor proteins (pTP, pIIIa, pVI, pVII, pVIII, and pX) inside newly assembled particles giving rise to mature virions. Protease complexed to its cofactor slides along the viral DNA to specifically locate and cleave the viral precursors. Mature virions have a weakened organization compared to the unmature virions, thereby facilitating subsequent uncoating. Without maturation, the particle lacks infectivity and is unable to uncoat. Late in adenovirus infection, in the cytoplasm, may participate in the cytoskeleton destruction. Cleaves host cell cytoskeletal keratins K7 and K18. This chain is Protease, found in Frog adenovirus 1 (strain ATCC VR-896) (FrAdV-1).